The sequence spans 209 residues: Ras-like GTP-binding protein RYL2 (209 aa).

12-19 (GAQGVGKT) lines the GTP pocket. The Effector region signature appears at 34 to 42 (QASTIGASF). Residues 60–64 (DTAGQ) and 118–121 (TKVD) each bind GTP. S-geranylgeranyl cysteine attachment occurs at residues Cys-208 and Cys-209.

This sequence belongs to the small GTPase superfamily. Rab family.

The protein localises to the cell membrane. Its function is as follows. Protein transport. Probably involved in vesicular traffic. This Yarrowia lipolytica (strain CLIB 122 / E 150) (Yeast) protein is Ras-like GTP-binding protein RYL2 (RYL2).